The chain runs to 87 residues: UPF0335 protein RHECIAT_CH0003797 (87 aa).

This sequence belongs to the UPF0335 family.

The protein is UPF0335 protein RHECIAT_CH0003797 of Rhizobium etli (strain CIAT 652).